Consider the following 47-residue polypeptide: Large ribosomal subunit protein bL34 (47 aa).

Composition is skewed to basic residues over residues 1 to 22 (MAKGKRTFQPNNRRRSRVHGFR) and 36 to 47 (ARRRKGRKSLTA). A disordered region spans residues 1–47 (MAKGKRTFQPNNRRRSRVHGFRSRMSTRAGRAIVSARRRKGRKSLTA).

This sequence belongs to the bacterial ribosomal protein bL34 family.

In Corynebacterium kroppenstedtii (strain DSM 44385 / JCM 11950 / CIP 105744 / CCUG 35717), this protein is Large ribosomal subunit protein bL34.